A 397-amino-acid chain; its full sequence is Argininosuccinate synthase (397 aa).

Residue 8-16 (AYSGGLDTS) participates in ATP binding. L-citrulline is bound by residues tyrosine 86 and serine 91. An ATP-binding site is contributed by glycine 116. L-aspartate is bound by residues threonine 118, asparagine 122, and aspartate 123. Asparagine 122 lines the L-citrulline pocket. 5 residues coordinate L-citrulline: arginine 126, serine 175, serine 184, glutamate 260, and tyrosine 272.

This sequence belongs to the argininosuccinate synthase family. Type 1 subfamily. Homotetramer.

It is found in the cytoplasm. It catalyses the reaction L-citrulline + L-aspartate + ATP = 2-(N(omega)-L-arginino)succinate + AMP + diphosphate + H(+). It participates in amino-acid biosynthesis; L-arginine biosynthesis; L-arginine from L-ornithine and carbamoyl phosphate: step 2/3. In Clostridium botulinum (strain ATCC 19397 / Type A), this protein is Argininosuccinate synthase.